The primary structure comprises 355 residues: uncharacterized protein (355 aa).

This is an uncharacterized protein from Aquifex aeolicus (strain VF5).